The chain runs to 129 residues: Glycine cleavage system H protein (129 aa).

Positions 23–104 (SVTVGITHHA…AYTAWLFKIK (82 aa)) constitute a Lipoyl-binding domain. Position 64 is an N6-lipoyllysine (K64).

The protein belongs to the GcvH family. The glycine cleavage system is composed of four proteins: P, T, L and H. Requires (R)-lipoate as cofactor.

The glycine cleavage system catalyzes the degradation of glycine. The H protein shuttles the methylamine group of glycine from the P protein to the T protein. This is Glycine cleavage system H protein from Thiobacillus denitrificans (strain ATCC 25259 / T1).